The chain runs to 248 residues: 4-hydroxy-tetrahydrodipicolinate reductase (248 aa).

NAD(+)-binding positions include Asp32, 74–76, and 99–102; these read GTT and SANF. His134 acts as the Proton donor/acceptor in catalysis. His135 contacts (S)-2,3,4,5-tetrahydrodipicolinate. Lys138 (proton donor) is an active-site residue. Position 144-145 (144-145) interacts with (S)-2,3,4,5-tetrahydrodipicolinate; that stretch reads GT.

The protein belongs to the DapB family.

It is found in the cytoplasm. The catalysed reaction is (S)-2,3,4,5-tetrahydrodipicolinate + NAD(+) + H2O = (2S,4S)-4-hydroxy-2,3,4,5-tetrahydrodipicolinate + NADH + H(+). It carries out the reaction (S)-2,3,4,5-tetrahydrodipicolinate + NADP(+) + H2O = (2S,4S)-4-hydroxy-2,3,4,5-tetrahydrodipicolinate + NADPH + H(+). It participates in amino-acid biosynthesis; L-lysine biosynthesis via DAP pathway; (S)-tetrahydrodipicolinate from L-aspartate: step 4/4. Functionally, catalyzes the conversion of 4-hydroxy-tetrahydrodipicolinate (HTPA) to tetrahydrodipicolinate. The sequence is that of 4-hydroxy-tetrahydrodipicolinate reductase from Pelodictyon phaeoclathratiforme (strain DSM 5477 / BU-1).